The following is a 336-amino-acid chain: Tyrosine recombinase XerC (336 aa).

A Core-binding (CB) domain is found at 14–106 (VANCRWLGEF…SVKSFYRFLL (93 aa)). Residues 127–330 (KIPDFLSEEE…TFNRLRDAYT (204 aa)) enclose the Tyr recombinase domain. Residues Arg-183, Lys-207, His-282, Arg-285, and His-308 contribute to the active site. Tyr-317 serves as the catalytic O-(3'-phospho-DNA)-tyrosine intermediate.

Belongs to the 'phage' integrase family. XerC subfamily. In terms of assembly, forms a cyclic heterotetrameric complex composed of two molecules of XerC and two molecules of XerD.

It localises to the cytoplasm. In terms of biological role, site-specific tyrosine recombinase, which acts by catalyzing the cutting and rejoining of the recombining DNA molecules. The XerC-XerD complex is essential to convert dimers of the bacterial chromosome into monomers to permit their segregation at cell division. It also contributes to the segregational stability of plasmids. The sequence is that of Tyrosine recombinase XerC from Chlorobaculum tepidum (strain ATCC 49652 / DSM 12025 / NBRC 103806 / TLS) (Chlorobium tepidum).